We begin with the raw amino-acid sequence, 128 residues long: Protein SOB FIVE-LIKE 3 (128 aa).

Disordered regions lie at residues 1–26 and 54–128; these read MEREECSSSESGWTTYISSRMEEEEE and KDSD…HKKK. Polar residues predominate over residues 8 to 18; it reads SSESGWTTYIS. The SOFL-A motif lies at 11–16; that stretch reads SGWTTY. An SOFL-B motif is present at residues 59–68; sequence SMASDASSGP. Residues 80–104 are compositionally biased toward basic and acidic residues; the sequence is REGLALRNGKGESNDVYSHRIDDKN. Residues 111–118 carry the Nuclear localization signal motif; that stretch reads RKKEKKKS.

It belongs to the SOFL plant protein family. As to expression, expressed in seedlings, roots, flowers and siliques.

The protein localises to the cytoplasm. The protein resides in the nucleus. Involved in cytokinin-mediated development. The polypeptide is Protein SOB FIVE-LIKE 3 (Arabidopsis thaliana (Mouse-ear cress)).